A 116-amino-acid chain; its full sequence is CDKN2AIP N-terminal-like protein (116 aa).

Residue M1 is modified to N-acetylmethionine. The XRN2-binding (XTBD) domain occupies 24–116; sequence AEQFRSYSES…RSELMKKHQS (93 aa).

It belongs to the CARF family. In terms of assembly, interacts with XRN2; the interaction is direct.

The sequence is that of CDKN2AIP N-terminal-like protein (Cdkn2aipnl) from Rattus norvegicus (Rat).